We begin with the raw amino-acid sequence, 466 residues long: tRNA modification GTPase MnmE (466 aa).

R25, E82, and K127 together coordinate (6S)-5-formyl-5,6,7,8-tetrahydrofolate. One can recognise a TrmE-type G domain in the interval 223 to 388; it reads GIKVVIAGQP…LRRQLLQIAG (166 aa). N233 is a binding site for K(+). Residues 233–238, 252–258, 277–280, 346–349, and 369–371 each bind GTP; these read NAGKSS, TPIAGTT, DTAG, NKAD, and SAR. S237 provides a ligand contact to Mg(2+). Residues T252, I254, and T257 each contribute to the K(+) site. T258 lines the Mg(2+) pocket. (6S)-5-formyl-5,6,7,8-tetrahydrofolate is bound at residue K466.

This sequence belongs to the TRAFAC class TrmE-Era-EngA-EngB-Septin-like GTPase superfamily. TrmE GTPase family. In terms of assembly, homodimer. Heterotetramer of two MnmE and two MnmG subunits. It depends on K(+) as a cofactor.

It localises to the cytoplasm. Its function is as follows. Exhibits a very high intrinsic GTPase hydrolysis rate. Involved in the addition of a carboxymethylaminomethyl (cmnm) group at the wobble position (U34) of certain tRNAs, forming tRNA-cmnm(5)s(2)U34. The polypeptide is tRNA modification GTPase MnmE (Acidovorax sp. (strain JS42)).